A 716-amino-acid polypeptide reads, in one-letter code: DNA ligase (716 aa).

NAD(+)-binding positions include 49 to 53 (DAEYD), 98 to 99 (SL), and Glu-131. Lys-133 serves as the catalytic N6-AMP-lysine intermediate. NAD(+) is bound by residues Arg-154, Glu-191, Lys-308, and Lys-332. The Zn(2+) site is built by Cys-437, Cys-439, Cys-461, and Cys-467. Positions 638–716 (KRHSPIATKT…EDEWLQLIAE (79 aa)) constitute a BRCT domain.

The protein belongs to the NAD-dependent DNA ligase family. LigA subfamily. The cofactor is Mg(2+). Mn(2+) is required as a cofactor.

The catalysed reaction is NAD(+) + (deoxyribonucleotide)n-3'-hydroxyl + 5'-phospho-(deoxyribonucleotide)m = (deoxyribonucleotide)n+m + AMP + beta-nicotinamide D-nucleotide.. Its function is as follows. DNA ligase that catalyzes the formation of phosphodiester linkages between 5'-phosphoryl and 3'-hydroxyl groups in double-stranded DNA using NAD as a coenzyme and as the energy source for the reaction. It is essential for DNA replication and repair of damaged DNA. The protein is DNA ligase of Bradyrhizobium sp. (strain BTAi1 / ATCC BAA-1182).